A 207-amino-acid polypeptide reads, in one-letter code: uncharacterized protein (207 aa).

The signal sequence occupies residues 1–19 (MRFNVSFLLSLLLPTLAFA).

The protein to P.multocida PM1509.

This is an uncharacterized protein from Pasteurella multocida (strain Pm70).